The chain runs to 156 residues: Small ribosomal subunit protein uS7 (156 aa).

This sequence belongs to the universal ribosomal protein uS7 family. Part of the 30S ribosomal subunit. Contacts proteins S9 and S11.

One of the primary rRNA binding proteins, it binds directly to 16S rRNA where it nucleates assembly of the head domain of the 30S subunit. Is located at the subunit interface close to the decoding center, probably blocks exit of the E-site tRNA. The sequence is that of Small ribosomal subunit protein uS7 from Onion yellows phytoplasma (strain OY-M).